Consider the following 357-residue polypeptide: Geranylgeranyl pyrophosphate synthase spyE (357 aa).

The segment at 36–60 (EAQSQAVPGTRTETEPTGSSPSDLQ) is disordered. The segment covering 50-59 (EPTGSSPSDL) has biased composition (polar residues). Isopentenyl diphosphate contacts are provided by K84, R87, and H116. Residues D123 and D127 each coordinate Mg(2+). Residue R132 participates in dimethylallyl diphosphate binding. R133 provides a ligand contact to isopentenyl diphosphate. Positions 210, 211, and 244 each coordinate dimethylallyl diphosphate. Residue D247 participates in Mg(2+) binding. Dimethylallyl diphosphate is bound by residues N251, K261, and K271.

It belongs to the FPP/GGPP synthase family. Mg(2+) is required as a cofactor.

It carries out the reaction isopentenyl diphosphate + dimethylallyl diphosphate = (2E)-geranyl diphosphate + diphosphate. The catalysed reaction is isopentenyl diphosphate + (2E)-geranyl diphosphate = (2E,6E)-farnesyl diphosphate + diphosphate. It catalyses the reaction isopentenyl diphosphate + (2E,6E)-farnesyl diphosphate = (2E,6E,10E)-geranylgeranyl diphosphate + diphosphate. The protein operates within secondary metabolite biosynthesis; terpenoid biosynthesis. Its function is as follows. Geranylgeranyl pyrophosphate synthase; part of the gene cluster that mediates the biosynthesis of meroterpenoids called sartorypyrones. Within the pathway, spyE provides the spyF cosubstrate geranylgeranyl pyrophosphate (GGPP) for the prenylation of triacetic acid lactone (TAL). The biosynthesis of sartorypyrones begins with the production of triacetic acid lactone (TAL) by the NR-PKS spyA using one molecule of acetyl-CoA and two molecules of malonyl-CoA. The prenyltransferase spyF then conjugates geranylgeranyl pyrophosphate (GGPP) to TAL to form geranylgeranyl-triacetate lactone, for which the pathway-specific geranylgeranyl pyrophosphate synthase (GGPS) spyE is required to provide GGPP. Subsequently, geranylgeranyl-triacetate lactone is epoxidized at the terminal olein by the FAD-dependent monooxygenase spyC, followed by cyclization of the terpenoid component catalyzed by the terpene cyclase spyD to produce both the bicyclic sartorypyrone F and the monocyclic sartorypyrone D. Finally, the last step of the biosynthesis involves the acetylation of the meroterpenoids sartorypyrones D and F by the acetyltransferase SpyB to produce sartorypyrones A and G, respectively. This Aspergillus fumigatus (strain ATCC MYA-4609 / CBS 101355 / FGSC A1100 / Af293) (Neosartorya fumigata) protein is Geranylgeranyl pyrophosphate synthase spyE.